The primary structure comprises 499 residues: Cytochrome P450 71A27 (499 aa).

Residues 3 to 23 traverse the membrane as a helical segment; it reads MILISLCLTTLLAFLFLKPLL. C438 contributes to the heme binding site.

This sequence belongs to the cytochrome P450 family. It depends on heme as a cofactor.

It localises to the membrane. In Arabidopsis thaliana (Mouse-ear cress), this protein is Cytochrome P450 71A27 (CYP71A27).